The sequence spans 1928 residues: Myosin-1 (1928 aa).

The Myosin N-terminal SH3-like domain maps to 8 to 71; that stretch reads SSNMIVWIPD…RISDVFPVNP (64 aa). Positions 75 to 791 constitute a Myosin motor domain; sequence DKVENMSELT…VLADLEKQKD (717 aa). 180–187 is a binding site for ATP; it reads GESGAGKT. An actin-binding region spans residues 460-529; it reads IGLLDIAGFE…LQLTIDLIES (70 aa). Residues 629-641 are compositionally biased toward polar residues; sequence SSSAGVEANISNQ. Residues 629–657 form a disordered region; the sequence is SSSAGVEANISNQEVKKSARTSTFKTTSS. The 30-residue stretch at 794 to 823 folds into the IQ domain; the sequence is LNNIMIKLTATIRGYTVRKEITYHLQKLKK. Residues 856-1911 adopt a coiled-coil conformation; sequence SSNDMTRTKK…FWKSRYESTM (1056 aa).

Belongs to the TRAFAC class myosin-kinesin ATPase superfamily. Myosin family.

In terms of biological role, required for cell division. The chain is Myosin-1 (MYO1) from Saccharomyces cerevisiae (strain ATCC 204508 / S288c) (Baker's yeast).